The sequence spans 45 residues: Cytochrome b559 subunit beta (45 aa).

Residues 20 to 36 traverse the membrane as a helical segment; sequence WLAVHTLGVPTVFFLGA. His-24 is a heme binding site.

The protein belongs to the PsbE/PsbF family. In terms of assembly, heterodimer of an alpha subunit and a beta subunit. PSII is composed of 1 copy each of membrane proteins PsbA, PsbB, PsbC, PsbD, PsbE, PsbF, PsbH, PsbI, PsbJ, PsbK, PsbL, PsbM, PsbT, PsbX, PsbY, PsbZ, Psb30/Ycf12, peripheral proteins PsbO, CyanoQ (PsbQ), PsbU, PsbV and a large number of cofactors. It forms dimeric complexes. Heme b serves as cofactor.

Its subcellular location is the cellular thylakoid membrane. Functionally, this b-type cytochrome is tightly associated with the reaction center of photosystem II (PSII). PSII is a light-driven water:plastoquinone oxidoreductase that uses light energy to abstract electrons from H(2)O, generating O(2) and a proton gradient subsequently used for ATP formation. It consists of a core antenna complex that captures photons, and an electron transfer chain that converts photonic excitation into a charge separation. This is Cytochrome b559 subunit beta from Nostoc punctiforme (strain ATCC 29133 / PCC 73102).